The chain runs to 754 residues: Lysophospholipase 3 (754 aa).

The first 19 residues, 1–19 (MKVNLKLIIGSILISQAQA), serve as a signal peptide directing secretion. Low complexity-rich tracts occupy residues 25-40 (SSGS…SETG) and 50-88 (LFGS…SSNS). A disordered region spans residues 25–88 (SSGSSSSSDS…DSSLFSSSNS (64 aa)). 16 N-linked (GlcNAc...) asparagine glycosylation sites follow: Asn112, Asn156, Asn174, Asn317, Asn325, Asn354, Asn391, Asn423, Asn470, Asn510, Asn515, Asn560, Asn577, Asn597, Asn625, and Asn631. The 557-residue stretch at 114 to 670 (TCPSKKTFIR…QEYCWTGGFK (557 aa)) folds into the PLA2c domain. Positions 687–721 (KTHTSGGTSSTTQQTSTTTGSSANGGSSSTGSSSS) are enriched in low complexity. The interval 687–727 (KTHTSGGTSSTTQQTSTTTGSSANGGSSSTGSSSSSKKKNG) is disordered.

The protein belongs to the lysophospholipase family.

It localises to the secreted. It carries out the reaction a 1-acyl-sn-glycero-3-phosphocholine + H2O = sn-glycerol 3-phosphocholine + a fatty acid + H(+). Catalyzes the release of fatty acids from lysophospholipids. Phospholipase B may well contribute to pathogenicity by abetting the fungus in damaging and traversing host cell membranes, processes which likely increase the rapidity of disseminated infection. In Candida albicans (Yeast), this protein is Lysophospholipase 3 (PLB3).